The primary structure comprises 363 residues: Spore germination protein YndE (363 aa).

10 helical membrane passes run 8–28 (ITTA…GVLT), 41–61 (DGWI…MIIA), 84–104 (LGHL…AFEV), 113–133 (FFLL…WIGL), 149–169 (MIFP…LGIF), 189–209 (VKTT…VAFM), 218–238 (AVVI…IMVI), 273–293 (FLLV…FYAA), 305–325 (PLSC…MPKN), and 335–355 (TVSH…LVIS).

It belongs to the amino acid-polyamine-organocation (APC) superfamily. Spore germination protein (SGP) (TC 2.A.3.9) family.

Its subcellular location is the cell membrane. Functionally, involved in the germinative response to L-alanine. Could be an amino acid transporter. This chain is Spore germination protein YndE (yndE), found in Bacillus subtilis (strain 168).